We begin with the raw amino-acid sequence, 382 residues long: Heme A synthase (382 aa).

The next 8 membrane-spanning stretches (helical) occupy residues 25–45 (GAVR…VAVG), 112–132 (LLGR…WARG), 141–161 (GLLG…IMVA), 176–196 (LALH…LAAG), 211–231 (VVAC…GLVA), 270–290 (LALV…VAIA), 303–323 (AAAG…GLGI), and 327–347 (LLHV…AVLI). His-277 is a binding site for heme. His-338 provides a ligand contact to heme.

Belongs to the COX15/CtaA family. Type 2 subfamily. Interacts with CtaB. Heme b serves as cofactor.

Its subcellular location is the cell membrane. It carries out the reaction Fe(II)-heme o + 2 A + H2O = Fe(II)-heme a + 2 AH2. The protein operates within porphyrin-containing compound metabolism; heme A biosynthesis; heme A from heme O: step 1/1. Catalyzes the conversion of heme O to heme A by two successive hydroxylations of the methyl group at C8. The first hydroxylation forms heme I, the second hydroxylation results in an unstable dihydroxymethyl group, which spontaneously dehydrates, resulting in the formyl group of heme A. The polypeptide is Heme A synthase (Methylorubrum extorquens (strain CM4 / NCIMB 13688) (Methylobacterium extorquens)).